Consider the following 628-residue polypeptide: DNA ligase (628 aa).

Residues 36–40, 85–86, and Glu-117 each bind NAD(+); these read DVEYD and SL. The active-site N6-AMP-lysine intermediate is the Lys-119. Residues Arg-140, Glu-174, Lys-309, and Lys-333 each contribute to the NAD(+) site. The Zn(2+) site is built by Cys-427, Cys-430, Cys-446, and Cys-452.

This sequence belongs to the NAD-dependent DNA ligase family. LigA subfamily. Mg(2+) is required as a cofactor. The cofactor is Mn(2+).

The catalysed reaction is NAD(+) + (deoxyribonucleotide)n-3'-hydroxyl + 5'-phospho-(deoxyribonucleotide)m = (deoxyribonucleotide)n+m + AMP + beta-nicotinamide D-nucleotide.. Its function is as follows. DNA ligase that catalyzes the formation of phosphodiester linkages between 5'-phosphoryl and 3'-hydroxyl groups in double-stranded DNA using NAD as a coenzyme and as the energy source for the reaction. It is essential for DNA replication and repair of damaged DNA. This is DNA ligase from Tropheryma whipplei (strain TW08/27) (Whipple's bacillus).